A 305-amino-acid chain; its full sequence is Cytochrome c biogenesis protein CcsA (305 aa).

8 helical membrane-spanning segments follow: residues 11–31 (GLGFGAFLLLLLALPLAFWAV), 37–57 (TGIVQLLVALANLLLTSQLVL), 63–83 (GHFPISNLYESLCFLAWACTL), 96–116 (IVAAAATPMGLGCIAFASFAL), 141–161 (VIMVSYAALLVGSLLSLAVLL), 212–232 (TITVGFLMLTVGIVSGAVWAN), 246–263 (TWALICWLVYAAYLHTRL), and 275–295 (VAVVGLVVIAVCYIGVNLLGI).

It belongs to the CcmF/CycK/Ccl1/NrfE/CcsA family. In terms of assembly, may interact with ccs1.

The protein localises to the cellular thylakoid membrane. Functionally, required during biogenesis of c-type cytochromes (cytochrome c6 and cytochrome f) at the step of heme attachment. This is Cytochrome c biogenesis protein CcsA from Parasynechococcus marenigrum (strain WH8102).